The following is a 205-amino-acid chain: Non-specific lipid transfer protein GPI-anchored 21 (205 aa).

A signal peptide spans 1–27 (MNSNSFLISAALIFSLLSSNSPTSILA). Intrachain disulfides connect cysteine 33–cysteine 75, cysteine 44–cysteine 59, cysteine 60–cysteine 100, and cysteine 73–cysteine 109. Asparagine 89 carries an N-linked (GlcNAc...) asparagine glycan. Residues 116–182 (LPTPGPASFG…FAPPPPSSSP (67 aa)) form a disordered region. Low complexity predominate over residues 126-156 (PTTSPTDSQTSDPEGSASFRPPTSPTTSQTP). Residue serine 179 is the site of GPI-anchor amidated serine attachment. Positions 180-205 (SSPSSSHSLKLSYLLFAFAFTIIKFI) are cleaved as a propeptide — removed in mature form.

Belongs to the plant LTP family.

It localises to the cell membrane. Probable lipid transfer protein. The sequence is that of Non-specific lipid transfer protein GPI-anchored 21 from Arabidopsis thaliana (Mouse-ear cress).